A 546-amino-acid chain; its full sequence is Phenylalanine--tRNA ligase beta subunit (546 aa).

Positions 266-342 (LAPAERVVSV…IAYGIENFDA (77 aa)) constitute a B5 domain. Mg(2+) is bound by residues Asp320, Asp326, Glu329, and Asp330.

It belongs to the phenylalanyl-tRNA synthetase beta subunit family. Type 2 subfamily. In terms of assembly, tetramer of two alpha and two beta subunits. Mg(2+) is required as a cofactor.

It localises to the cytoplasm. The enzyme catalyses tRNA(Phe) + L-phenylalanine + ATP = L-phenylalanyl-tRNA(Phe) + AMP + diphosphate + H(+). In Methanoculleus marisnigri (strain ATCC 35101 / DSM 1498 / JR1), this protein is Phenylalanine--tRNA ligase beta subunit.